The following is a 340-amino-acid chain: Very-long-chain 3-oxoacyl-CoA reductase (340 aa).

A helical membrane pass occupies residues 23–43 (LQYTFAALGALYVLRGALSFV). Positions 68, 109, 123, 131, 150, 185, 217, 221, 250, and 252 each coordinate NADP(+). Catalysis depends on Tyr217, which acts as the Proton donor. Lys221 serves as the catalytic Lowers pKa of active site Tyr.

The protein belongs to the short-chain dehydrogenases/reductases (SDR) family.

It is found in the endoplasmic reticulum membrane. The enzyme catalyses a very-long-chain (3R)-3-hydroxyacyl-CoA + NADP(+) = a very-long-chain 3-oxoacyl-CoA + NADPH + H(+). Its pathway is lipid metabolism; fatty acid biosynthesis. Component of the microsomal membrane bound fatty acid elongation system, which produces the 26-carbon very long-chain fatty acids (VLCFA) from palmitate. Catalyzes the reduction of the 3-ketoacyl-CoA intermediate that is formed in each cycle of fatty acid elongation. VLCFAs serve as precursors for ceramide and sphingolipids. In Podospora anserina (strain S / ATCC MYA-4624 / DSM 980 / FGSC 10383) (Pleurage anserina), this protein is Very-long-chain 3-oxoacyl-CoA reductase.